We begin with the raw amino-acid sequence, 187 residues long: Major allergen Equ c 1 (187 aa).

A signal peptide (or 16, or 21) is located at residues 1 to 15 (MKLLLLCLGLILVCA). 2 N-linked (GlcNAc...) asparagine glycosylation sites follow: asparagine 53 and asparagine 68. Residues cysteine 83 and cysteine 176 are joined by a disulfide bond.

Belongs to the calycin superfamily. Lipocalin family. In terms of assembly, homodimer. Several N-terminal ends may be due to cleavage by signal peptidase at different sites or may be generated by proteolytic processing of the secreted protein. In terms of processing, analysis of the sugar composition shows the presence of GalNAc, Gal, NeuAc, GlcNAc, and Man. May be also O-glycosylated. In terms of tissue distribution, expressed in liver and in sublingual and submaxillary salivary glands. Highly concentrated in secretory fluid such as saliva and urine as well as in hair dandruff extract.

Its subcellular location is the secreted. In Equus caballus (Horse), this protein is Major allergen Equ c 1.